The chain runs to 127 residues: DNA-directed RNA polymerase subunit omega (127 aa).

The protein belongs to the RNA polymerase subunit omega family. As to quaternary structure, the RNAP catalytic core consists of 2 alpha, 1 beta, 1 beta' and 1 omega subunit. When a sigma factor is associated with the core the holoenzyme is formed, which can initiate transcription.

It carries out the reaction RNA(n) + a ribonucleoside 5'-triphosphate = RNA(n+1) + diphosphate. In terms of biological role, promotes RNA polymerase assembly. Latches the N- and C-terminal regions of the beta' subunit thereby facilitating its interaction with the beta and alpha subunits. The sequence is that of DNA-directed RNA polymerase subunit omega from Rickettsia canadensis (strain McKiel).